A 440-amino-acid chain; its full sequence is Enolase (440 aa).

Positions 159 and 168 each coordinate substrate. The active-site Proton donor is Glu-211. Residues Asp-245, Glu-296, and Asp-321 each coordinate Mg(2+). Glu-296 and Asp-321 together coordinate substrate. The Proton acceptor role is filled by Lys-346. Substrate is bound by residues 373 to 376 and Lys-397; that span reads SHRS.

It belongs to the enolase family. As to quaternary structure, homodimer. Mg(2+) is required as a cofactor.

Its subcellular location is the cytoplasm. It carries out the reaction (2R)-2-phosphoglycerate = phosphoenolpyruvate + H2O. It participates in carbohydrate degradation; glycolysis; pyruvate from D-glyceraldehyde 3-phosphate: step 4/5. The protein is Enolase (eno-1) of Tuber borchii (White truffle).